Here is a 156-residue protein sequence, read N- to C-terminus: Small ribosomal subunit protein uS7 (156 aa).

It belongs to the universal ribosomal protein uS7 family. In terms of assembly, part of the 30S ribosomal subunit. Contacts proteins S9 and S11.

Functionally, one of the primary rRNA binding proteins, it binds directly to 16S rRNA where it nucleates assembly of the head domain of the 30S subunit. Is located at the subunit interface close to the decoding center, probably blocks exit of the E-site tRNA. The sequence is that of Small ribosomal subunit protein uS7 from Bacillus pumilus (strain SAFR-032).